The chain runs to 473 residues: Dol-P-Glc:Glc(2)Man(9)GlcNAc(2)-PP-Dol alpha-1,2-glucosyltransferase (473 aa).

Residues 1–6 (MAQLEG) are Cytoplasmic-facing. Residues 7–27 (YCFSAALSCTFLVSCLLFSAF) form a helical membrane-spanning segment. Topologically, residues 28–64 (SRALREPYMDEIFHLPQAQRYCEGHFSLSQWDPMITT) are extracellular. The chain crosses the membrane as a helical span at residues 65-85 (LPGLYLVSVGVVKPAIWIFAW). Residues 86 to 97 (SEHVVCSIGMLR) are Cytoplasmic-facing. A helical transmembrane segment spans residues 98-118 (FVNLLFSVGNFYLLYLLFHKV). Over 119–126 (QPRNKAAS) the chain is Extracellular. A helical membrane pass occupies residues 127–147 (SIQRVLSTLTLAVFPTLYFFN). The Cytoplasmic portion of the chain corresponds to 148 to 150 (FLY). Residues 151-171 (YTEAGSMFFTLFAYLMCLYGN) traverse the membrane as a helical segment. The Extracellular portion of the chain corresponds to 172 to 175 (HKTS). A helical transmembrane segment spans residues 176–196 (AFLGFCGFMFRQTNIIWAVFC). The Cytoplasmic portion of the chain corresponds to 197-256 (AGNVIAQKLTEAWKTELQKKEDRLPPIKGPFAEFRKILQFLLAYSMSFKNLSMLFCLTWP). The helical transmembrane segment at 257-277 (YILLGFLFCAFVVVNGGIVIG) threads the bilayer. The Extracellular segment spans residues 278–283 (DRSSHE). Residues 284 to 304 (ACLHFPQLFYFFSFTLFFSFP) form a helical membrane-spanning segment. At 305-317 (HLLSPSKIKTFLS) the chain is on the cytoplasmic side. A helical transmembrane segment spans residues 318-338 (LVWKHGILFLVVTLVSVFLVW). Over 339–365 (KFTYAHKYLLADNRHYTFYVWKRVFQR) the chain is Extracellular. A helical transmembrane segment spans residues 366–386 (YAILKYLLVPAYIFAGWSIAD). Over 387 to 392 (SLKSKP) the chain is Cytoplasmic. The helical transmembrane segment at 393–413 (IFWNLMFFICLFIVIVPQKLL) threads the bilayer. Topologically, residues 414-436 (EFRYFILPYVIYRLNITLPPTSR) are extracellular. Residues 437-457 (LVCELSCYAIVNFITFYIFLN) traverse the membrane as a helical segment. Residues 458–473 (KTFQWPNSQDIQRFMW) lie on the Cytoplasmic side of the membrane.

The protein belongs to the ALG10 glucosyltransferase family. As to quaternary structure, interacts with KCNH1; may regulate KCNH1, possibly by regulating its N-glycosylation. Interacts with KCNH2; may reduce KCNH2 sensitivity to classic proarrhythmic drug blockade, possibly by regulating its N-glycosylation. Highly expressed in heart, placenta, liver, kidney and pancreas. Weakly expressed in lung, skeletal muscle and brain.

It is found in the endoplasmic reticulum membrane. The catalysed reaction is an alpha-D-Glc-(1-&gt;3)-alpha-D-Glc-(1-&gt;3)-alpha-D-Man-(1-&gt;2)-alpha-D-Man-(1-&gt;2)-alpha-D-Man-(1-&gt;3)-[alpha-D-Man-(1-&gt;2)-alpha-D-Man-(1-&gt;3)-[alpha-D-Man-(1-&gt;2)-alpha-D-Man-(1-&gt;6)]-alpha-D-Man-(1-&gt;6)]-beta-D-Man-(1-&gt;4)-beta-D-GlcNAc-(1-&gt;4)-alpha-D-GlcNAc-diphospho-di-trans,poly-cis-dolichol + a di-trans,poly-cis-dolichyl beta-D-glucosyl phosphate = a alpha-D-Glc-(1-&gt;2)-alpha-D-Glc-(1-&gt;3)-alpha-D-Glc-(1-&gt;3)-alpha-D-Man-(1-&gt;2)-alpha-D-Man-(1-&gt;2)-alpha-D-Man-(1-&gt;3)-[alpha-D-Man-(1-&gt;2)-alpha-D-Man-(1-&gt;3)-[alpha-D-Man-(1-&gt;2)-alpha-D-Man-(1-&gt;6)]-alpha-D-Man-(1-&gt;6)]-beta-D-Man-(1-&gt;4)-beta-D-GlcNAc-(1-&gt;4)-alpha-D-GlcNAc-diphospho-di-trans,poly-cis-dolichol + a di-trans,poly-cis-dolichyl phosphate + H(+). It functions in the pathway protein modification; protein glycosylation. In terms of biological role, dol-P-Glc:Glc(2)Man(9)GlcNAc(2)-PP-Dol alpha-1,2-glucosyltransferase that operates in the biosynthetic pathway of dolichol-linked oligosaccharides, the glycan precursors employed in protein asparagine (N)-glycosylation. The assembly of dolichol-linked oligosaccharides begins on the cytosolic side of the endoplasmic reticulum membrane and finishes in its lumen. The sequential addition of sugars to dolichol pyrophosphate produces dolichol-linked oligosaccharides containing fourteen sugars, including two GlcNAcs, nine mannoses and three glucoses. Once assembled, the oligosaccharide is transferred from the lipid to nascent proteins by oligosaccharyltransferases. In the lumen of the endoplasmic reticulum, adds the third and last glucose residue from dolichyl phosphate glucose (Dol-P-Glc) onto the lipid-linked oligosaccharide intermediate Glc(2)Man(9)GlcNAc(2)-PP-Dol to produce Glc(3)Man(9)GlcNAc(2)-PP-Dol. The chain is Dol-P-Glc:Glc(2)Man(9)GlcNAc(2)-PP-Dol alpha-1,2-glucosyltransferase from Homo sapiens (Human).